The sequence spans 593 residues: Probable tripeptidyl-peptidase SED3 (593 aa).

The N-terminal stretch at 1 to 18 (MLLRWHSVIPLFLAMTVA) is a signal peptide. Residues 19 to 198 (FPNTYRTVVE…NLQAIYLSTN (180 aa)) constitute a propeptide, removed in mature form. 3 N-linked (GlcNAc...) asparagine glycosylation sites follow: Asn204, Asn261, and Asn275. The region spanning 206–592 (TITPRCLREL…RILAKIVQHM (387 aa)) is the Peptidase S53 domain. Active-site charge relay system residues include Glu282 and Asp286. N-linked (GlcNAc...) asparagine glycosylation occurs at Asn295. Ser496 acts as the Charge relay system in catalysis. Residues Asp538 and Ile539 each coordinate Ca(2+). 2 N-linked (GlcNAc...) asparagine glycosylation sites follow: Asn554 and Asn566. Positions 570 and 572 each coordinate Ca(2+).

It depends on Ca(2+) as a cofactor.

The protein resides in the secreted. It localises to the extracellular space. The enzyme catalyses Release of an N-terminal tripeptide from a polypeptide.. Its function is as follows. Secreted tripeptidyl-peptidase which degrades proteins at acidic pHs and is involved in virulence. This is Probable tripeptidyl-peptidase SED3 (SED3) from Arthroderma benhamiae (strain ATCC MYA-4681 / CBS 112371) (Trichophyton mentagrophytes).